A 338-amino-acid polypeptide reads, in one-letter code: Lipoate-protein ligase A (338 aa).

The 188-residue stretch at 29 to 216 (PATQRVLFLW…AFFAHYGERV (188 aa)) folds into the BPL/LPL catalytic domain. ATP is bound by residues arginine 71, 76-79 (GAVF), and lysine 134. Residue lysine 134 participates in (R)-lipoate binding.

This sequence belongs to the LplA family. Monomer.

Its subcellular location is the cytoplasm. It carries out the reaction L-lysyl-[lipoyl-carrier protein] + (R)-lipoate + ATP = N(6)-[(R)-lipoyl]-L-lysyl-[lipoyl-carrier protein] + AMP + diphosphate + H(+). Its pathway is protein modification; protein lipoylation via exogenous pathway; protein N(6)-(lipoyl)lysine from lipoate: step 1/2. It participates in protein modification; protein lipoylation via exogenous pathway; protein N(6)-(lipoyl)lysine from lipoate: step 2/2. Functionally, catalyzes both the ATP-dependent activation of exogenously supplied lipoate to lipoyl-AMP and the transfer of the activated lipoyl onto the lipoyl domains of lipoate-dependent enzymes. The sequence is that of Lipoate-protein ligase A from Escherichia coli O157:H7.